The chain runs to 180 residues: Large ribosomal subunit protein uL6 (180 aa).

This sequence belongs to the universal ribosomal protein uL6 family. In terms of assembly, part of the 50S ribosomal subunit.

This protein binds to the 23S rRNA, and is important in its secondary structure. It is located near the subunit interface in the base of the L7/L12 stalk, and near the tRNA binding site of the peptidyltransferase center. In Clostridium kluyveri (strain NBRC 12016), this protein is Large ribosomal subunit protein uL6.